A 307-amino-acid chain; its full sequence is 4-hydroxythreonine-4-phosphate dehydrogenase (307 aa).

Substrate is bound by residues histidine 126 and threonine 127. Histidine 156, histidine 195, and histidine 251 together coordinate a divalent metal cation. Positions 259, 268, and 277 each coordinate substrate.

The protein belongs to the PdxA family. As to quaternary structure, homodimer. Zn(2+) is required as a cofactor. It depends on Mg(2+) as a cofactor. Co(2+) serves as cofactor.

It localises to the cytoplasm. The catalysed reaction is 4-(phosphooxy)-L-threonine + NAD(+) = 3-amino-2-oxopropyl phosphate + CO2 + NADH. Its pathway is cofactor biosynthesis; pyridoxine 5'-phosphate biosynthesis; pyridoxine 5'-phosphate from D-erythrose 4-phosphate: step 4/5. Functionally, catalyzes the NAD(P)-dependent oxidation of 4-(phosphooxy)-L-threonine (HTP) into 2-amino-3-oxo-4-(phosphooxy)butyric acid which spontaneously decarboxylates to form 3-amino-2-oxopropyl phosphate (AHAP). This chain is 4-hydroxythreonine-4-phosphate dehydrogenase, found in Helicobacter pylori (strain ATCC 700392 / 26695) (Campylobacter pylori).